The sequence spans 263 residues: Methylesterase 1 (263 aa).

Serine 85 (acyl-ester intermediate) is an active-site residue. Active-site charge relay system residues include aspartate 213 and histidine 241.

It belongs to the AB hydrolase superfamily. Methylesterase family.

The catalysed reaction is methyl (indol-3-yl)acetate + H2O = (indol-3-yl)acetate + methanol + H(+). The enzyme catalyses methyl (-)-jasmonate + H2O = jasmonate + methanol + H(+). It carries out the reaction methyl salicylate + H2O = salicylate + methanol + H(+). It participates in plant hormone biosynthesis. Its pathway is lipid metabolism; oxylipin biosynthesis. Its activity is regulated as follows. Esterase activity is down-regulated by salicylic acid (SA). In terms of biological role, methylesterase shown to have carboxylesterase activity, methyl indole-3-acetic acid (MeIAA) esterase activity, methyl salicylate (MeSA) esterase activity and methyl jasmonate (MeJA) esterase activity in vitro. Required to convert methyl salicylate (MeSA) to salicylic acid (SA) as part of the signal transduction pathways that activate systemic acquired resistance in systemic tissue. MeSA is believed to be an inactive form that needs to be demethylated to exert a biological effect. The polypeptide is Methylesterase 1 (Arabidopsis thaliana (Mouse-ear cress)).